Consider the following 116-residue polypeptide: Small ribosomal subunit protein bS16 (116 aa).

It belongs to the bacterial ribosomal protein bS16 family.

This chain is Small ribosomal subunit protein bS16, found in Chlamydia muridarum (strain MoPn / Nigg).